Here is a 100-residue protein sequence, read N- to C-terminus: Large ribosomal subunit protein uL23 (100 aa).

The protein belongs to the universal ribosomal protein uL23 family. As to quaternary structure, part of the 50S ribosomal subunit. Contacts protein L29, and trigger factor when it is bound to the ribosome.

One of the early assembly proteins it binds 23S rRNA. One of the proteins that surrounds the polypeptide exit tunnel on the outside of the ribosome. Forms the main docking site for trigger factor binding to the ribosome. The sequence is that of Large ribosomal subunit protein uL23 from Pectobacterium atrosepticum (strain SCRI 1043 / ATCC BAA-672) (Erwinia carotovora subsp. atroseptica).